The chain runs to 273 residues: Imidazole glycerol phosphate synthase subunit HisF (273 aa).

Catalysis depends on residues aspartate 11 and aspartate 134.

Belongs to the HisA/HisF family. As to quaternary structure, heterodimer of HisH and HisF.

Its subcellular location is the cytoplasm. It carries out the reaction 5-[(5-phospho-1-deoxy-D-ribulos-1-ylimino)methylamino]-1-(5-phospho-beta-D-ribosyl)imidazole-4-carboxamide + L-glutamine = D-erythro-1-(imidazol-4-yl)glycerol 3-phosphate + 5-amino-1-(5-phospho-beta-D-ribosyl)imidazole-4-carboxamide + L-glutamate + H(+). Its pathway is amino-acid biosynthesis; L-histidine biosynthesis; L-histidine from 5-phospho-alpha-D-ribose 1-diphosphate: step 5/9. Functionally, IGPS catalyzes the conversion of PRFAR and glutamine to IGP, AICAR and glutamate. The HisF subunit catalyzes the cyclization activity that produces IGP and AICAR from PRFAR using the ammonia provided by the HisH subunit. This chain is Imidazole glycerol phosphate synthase subunit HisF, found in Methanosarcina acetivorans (strain ATCC 35395 / DSM 2834 / JCM 12185 / C2A).